A 129-amino-acid polypeptide reads, in one-letter code: Glycine cleavage system H protein (129 aa).

Positions 24–106 (TYTVGITEHA…YTGGWIFKIK (83 aa)) constitute a Lipoyl-binding domain. Lys65 bears the N6-lipoyllysine mark.

The protein belongs to the GcvH family. In terms of assembly, the glycine cleavage system is composed of four proteins: P, T, L and H. (R)-lipoate serves as cofactor.

The glycine cleavage system catalyzes the degradation of glycine. The H protein shuttles the methylamine group of glycine from the P protein to the T protein. This chain is Glycine cleavage system H protein, found in Salmonella choleraesuis (strain SC-B67).